The sequence spans 329 residues: Ribosomal protein L11 methyltransferase (329 aa).

Thr177, Gly198, Asp220, and Asn264 together coordinate S-adenosyl-L-methionine.

Belongs to the methyltransferase superfamily. PrmA family.

It is found in the cytoplasm. It catalyses the reaction L-lysyl-[protein] + 3 S-adenosyl-L-methionine = N(6),N(6),N(6)-trimethyl-L-lysyl-[protein] + 3 S-adenosyl-L-homocysteine + 3 H(+). Its function is as follows. Methylates ribosomal protein L11. The protein is Ribosomal protein L11 methyltransferase of Helicobacter pylori (strain Shi470).